The sequence spans 215 residues: MOB kinase activator-like 1B (215 aa).

Residues 1 to 25 (MSLFGLGRNQKTFRPKKSAPSGTKG) form a disordered region. Positions 79, 84, 161, and 166 each coordinate Zn(2+).

This sequence belongs to the MOB1/phocein family. In terms of assembly, interacts with SIK1. As to expression, expression is detected along the vasculature in cotyledons, hypocotyls and roots of 3- to 4-day-old seedlings.

This is MOB kinase activator-like 1B from Arabidopsis thaliana (Mouse-ear cress).